The primary structure comprises 275 residues: NH(3)-dependent NAD(+) synthetase (275 aa).

46-53 (GISGGQDS) contributes to the ATP binding site. Aspartate 52 serves as a coordination point for Mg(2+). Arginine 140 lines the deamido-NAD(+) pocket. Position 160 (threonine 160) interacts with ATP. Glutamate 165 provides a ligand contact to Mg(2+). The deamido-NAD(+) site is built by lysine 173 and aspartate 180. ATP contacts are provided by lysine 189 and threonine 211. Position 260-261 (260-261 (HK)) interacts with deamido-NAD(+).

Belongs to the NAD synthetase family. In terms of assembly, homodimer.

It carries out the reaction deamido-NAD(+) + NH4(+) + ATP = AMP + diphosphate + NAD(+) + H(+). It participates in cofactor biosynthesis; NAD(+) biosynthesis; NAD(+) from deamido-NAD(+) (ammonia route): step 1/1. Catalyzes the ATP-dependent amidation of deamido-NAD to form NAD. Uses ammonia as a nitrogen source. The protein is NH(3)-dependent NAD(+) synthetase of Escherichia coli O8 (strain IAI1).